A 642-amino-acid polypeptide reads, in one-letter code: Threonine--tRNA ligase (642 aa).

A TGS domain is found at M1–T61. The segment at D243–P534 is catalytic. Zn(2+)-binding residues include C334, H385, and H511.

This sequence belongs to the class-II aminoacyl-tRNA synthetase family. As to quaternary structure, homodimer. It depends on Zn(2+) as a cofactor.

The protein resides in the cytoplasm. The enzyme catalyses tRNA(Thr) + L-threonine + ATP = L-threonyl-tRNA(Thr) + AMP + diphosphate + H(+). Functionally, catalyzes the attachment of threonine to tRNA(Thr) in a two-step reaction: L-threonine is first activated by ATP to form Thr-AMP and then transferred to the acceptor end of tRNA(Thr). Also edits incorrectly charged L-seryl-tRNA(Thr). The chain is Threonine--tRNA ligase from Cellvibrio japonicus (strain Ueda107) (Pseudomonas fluorescens subsp. cellulosa).